The sequence spans 135 residues: ATP synthase epsilon chain (135 aa).

Belongs to the ATPase epsilon chain family. F-type ATPases have 2 components, CF(1) - the catalytic core - and CF(0) - the membrane proton channel. CF(1) has five subunits: alpha(3), beta(3), gamma(1), delta(1), epsilon(1). CF(0) has three main subunits: a, b and c.

The protein resides in the cell inner membrane. Produces ATP from ADP in the presence of a proton gradient across the membrane. The chain is ATP synthase epsilon chain from Rhizobium johnstonii (strain DSM 114642 / LMG 32736 / 3841) (Rhizobium leguminosarum bv. viciae).